A 277-amino-acid polypeptide reads, in one-letter code: Large ribosomal subunit protein uL2 (277 aa).

The disordered stretch occupies residues 219-277 (TVRGSVMNPNDHPHGGGEGKAPVGRKAPSTPWGKPALGLKTRNKKAKSDKLIVRRRNQK).

Belongs to the universal ribosomal protein uL2 family. Part of the 50S ribosomal subunit. Forms a bridge to the 30S subunit in the 70S ribosome.

In terms of biological role, one of the primary rRNA binding proteins. Required for association of the 30S and 50S subunits to form the 70S ribosome, for tRNA binding and peptide bond formation. It has been suggested to have peptidyltransferase activity; this is somewhat controversial. Makes several contacts with the 16S rRNA in the 70S ribosome. The protein is Large ribosomal subunit protein uL2 of Streptococcus suis (strain 98HAH33).